The chain runs to 504 residues: SPbeta prophage-derived uncharacterized protein YorI (504 aa).

The protein is SPbeta prophage-derived uncharacterized protein YorI (yorI) of Bacillus subtilis (strain 168).